A 275-amino-acid polypeptide reads, in one-letter code: Elongation factor Ts (275 aa).

Residues 76–79 (TDFV) form an involved in Mg(2+) ion dislocation from EF-Tu region.

This sequence belongs to the EF-Ts family.

It localises to the cytoplasm. In terms of biological role, associates with the EF-Tu.GDP complex and induces the exchange of GDP to GTP. It remains bound to the aminoacyl-tRNA.EF-Tu.GTP complex up to the GTP hydrolysis stage on the ribosome. The chain is Elongation factor Ts from Mycobacterium avium (strain 104).